Here is a 604-residue protein sequence, read N- to C-terminus: Prostaglandin G/H synthase 2 (604 aa).

Residues 1–17 (MLFRAVLLCAALGLSQA) form the signal peptide. Residues 18-55 (ANPCCSNPCQNRGECMSTGFDQYKCDCTRTGFYGENCT) enclose the EGF-like domain. 4 disulfides stabilise this stretch: Cys21-Cys32, Cys22-Cys145, Cys26-Cys42, and Cys44-Cys54. N-linked (GlcNAc...) asparagine glycosylation occurs at Asn53. Arg106 serves as a coordination point for substrate. N-linked (GlcNAc...) asparagine glycosylation is present at Asn130. His193 serves as the catalytic Proton acceptor. Tyr341 provides a ligand contact to substrate. Residue Tyr371 is the For cyclooxygenase activity of the active site. His374 lines the heme b pocket. Asn396 is a glycosylation site (N-linked (GlcNAc...) asparagine). Cys526 carries the post-translational modification S-nitrosocysteine. Residues Cys555 and Cys561 are joined by a disulfide bond. O-acetylserine; by SPHK1 is present on Ser565. Asn580 carries N-linked (GlcNAc...) asparagine glycosylation.

The protein belongs to the prostaglandin G/H synthase family. In terms of assembly, homodimer. It depends on heme b as a cofactor. Post-translationally, S-nitrosylation by NOS2 (iNOS) activates enzyme activity. S-nitrosylation may take place on different Cys residues in addition to Cys-526. Acetylated at Ser-565 by SPHK1. During neuroinflammation, acetylation by SPHK1 promotes neuronal secretion of specialized preresolving mediators (SPMs), especially 15-R-lipoxin A4, which results in an increase of phagocytic microglia. In terms of tissue distribution, following colon injury, expressed in the wound bed mesenchyme during the first phase of repair, probably by colonic mesenchymal stem cells (at protein level).

The protein localises to the microsome membrane. It localises to the endoplasmic reticulum membrane. It is found in the nucleus inner membrane. Its subcellular location is the nucleus outer membrane. The enzyme catalyses (5Z,8Z,11Z,14Z)-eicosatetraenoate + AH2 + 2 O2 = prostaglandin H2 + A + H2O. The catalysed reaction is (5Z,8Z,11Z,14Z)-eicosatetraenoate + 2 O2 = prostaglandin G2. It carries out the reaction prostaglandin G2 + AH2 = prostaglandin H2 + A + H2O. It catalyses the reaction (5Z,8Z,11Z,14Z,17Z)-eicosapentaenoate + 2 O2 = prostaglandin G3. The enzyme catalyses prostaglandin G3 + AH2 = prostaglandin H3 + A + H2O. The catalysed reaction is (8Z,11Z,14Z)-eicosatrienoate + 2 O2 = prostaglandin G1. It carries out the reaction prostaglandin G1 + AH2 = prostaglandin H1 + A + H2O. It catalyses the reaction 2-(5Z,8Z,11Z,14Z)-eicosatetraenoyl-sn-glycero-3-phosphoethanolamine + 2 O2 = 2-(prostaglandin G2)-sn-glycero-3-phosphoethanolamine. The enzyme catalyses 2-(prostaglandin G2)-sn-glycero-3-phosphoethanolamine + AH2 = 2-(prostaglandin H2)-sn-glycero-3-phosphoethanolamine + A + H2O. The catalysed reaction is 2-(5Z,8Z,11Z,14Z)-eicosatetraenoyl-sn-glycero-3-phosphocholine + 2 O2 = 2-(prostaglandin G2)-sn-glycero-3-phosphocholine. It carries out the reaction 2-(prostaglandin G2)-sn-glycero-3-phosphocholine + AH2 = 2-(prostaglandin H2)-sn-glycero-3-phosphocholine + A + H2O. It catalyses the reaction (15S)-hydroperoxy-(5Z,8Z,11Z,13E)-eicosatetraenoate + AH2 = (15S)-hydroxy-(5Z,8Z,11Z,13E)-eicosatetraenoate + A + H2O. The enzyme catalyses 2-(5Z,8Z,11Z,14Z)-eicosatetraenoyl-sn-glycero-3-phosphocholine + AH2 + O2 = 2-[(15S)-hydroxy-(5Z,8Z,11Z,13E)-eicosatetraenoyl]-sn-glycero-3-phosphocholine + A + H2O. The catalysed reaction is 2-(5Z,8Z,11Z,14Z)-eicosatetraenoyl-sn-glycero-3-phosphocholine + AH2 + O2 = 2-[(15R)-hydroxy-(5Z,8Z,11Z,13E)-eicosatetraenoyl]-sn-glycero-3-phosphocholine + A + H2O. It carries out the reaction 2-(5Z,8Z,11Z,14Z)-eicosatetraenoyl-sn-glycero-3-phosphocholine + AH2 + O2 = 2-[(11R)-hydroxy-(5Z,8Z,12E,14Z)-eicosatetraenoyl]-sn-glycero-3-phosphocholine + A + H2O. It catalyses the reaction (9Z,12Z)-octadecadienoate + AH2 + O2 = 9-hydroxy-(10E,12Z)-octadecadienoate + A + H2O. The enzyme catalyses (9Z,12Z)-octadecadienoate + AH2 + O2 = 13-hydroxy-(9Z,11E)-octadecadienoate + A + H2O. The catalysed reaction is (5Z,8Z,11Z,14Z)-eicosatetraenoate + AH2 + O2 = (15R)-hydroxy-(5Z,8Z,11Z,13E)-eicosatetraenoate + A + H2O. It carries out the reaction (5Z,8Z,11Z,14Z)-eicosatetraenoate + AH2 + O2 = (11R)-hydroxy-(5Z,8Z,12E,14Z)-eicosatetraenoate + A + H2O. It catalyses the reaction (5Z,8Z,11Z,14Z,17Z)-eicosapentaenoate + AH2 + O2 = (11R)-hydroxy-(5Z,8Z,12E,14Z,17Z)-eicosapentaenoate + A + H2O. The enzyme catalyses (5Z,8Z,11Z,14Z,17Z)-eicosapentaenoate + AH2 + O2 = (18S)-hydroxy-(5Z,8Z,11Z,14Z,16E)-eicosapentaenoate + A + H2O. The catalysed reaction is (5Z,8Z,11Z,14Z,17Z)-eicosapentaenoate + AH2 + O2 = (18R)-hydroxy-(5Z,8Z,11Z,14Z,16E)-eicosapentaenoate + A + H2O. It carries out the reaction (5Z,8Z,11Z,14Z,17Z)-eicosapentaenoate + AH2 + O2 = (15R)-hydroxy-(5Z,8Z,11Z,13E,17Z)-eicosapentaenoate + A + H2O. It catalyses the reaction (5Z,8Z,11Z,14Z,17Z)-eicosapentaenoate + AH2 + O2 = (15S)-hydroxy-(5Z,8Z,11Z,13E,17Z)-eicosapentaenoate + A + H2O. The enzyme catalyses (7Z,10Z,13Z,16Z,19Z)-docosapentaenoate + AH2 + O2 = 13R-hydroxy-(7Z,10Z,14E,16Z,19Z)-docosapentaenoate + A + H2O. The catalysed reaction is (4Z,7Z,10Z,13Z,16Z,19Z)-docosahexaenoate + AH2 + O2 = 13-hydroxy-(4Z,7Z,10Z,14E,16Z,19Z)-docosahexaenoate + A + H2O. It carries out the reaction (5S)-hydroxy-(6E,8Z,11Z,14Z)-eicosatetraenoate + AH2 + O2 = (5S,15R)-dihydroxy-(6E,8Z,11Z,13E)-eicosatetraenoate + A + H2O. It catalyses the reaction (4Z,7Z,10Z,13Z,16Z,19Z)-docosahexaenoate + AH2 + O2 = 17R-hydroxy-(4Z,7Z,10Z,13Z,15E,19Z)-docosahexaenoate + A + H2O. The enzyme catalyses (5S)-hydroxy-(6E,8Z,11Z,14Z)-eicosatetraenoate + AH2 + O2 = (5S,15S)-dihydroxy-(6E,8Z,11Z,13E)-eicosatetraenoate + A + H2O. The catalysed reaction is (5S)-hydroxy-(6E,8Z,11Z,14Z)-eicosatetraenoate + AH2 + O2 = (5S,11R)-dihydroxy-(6E,8Z,12E,14Z)-eicosatetraenoate + A + H2O. It carries out the reaction 2-(5Z,8Z,11Z,14Z-eicosatetraenoyl)-glycerol + 2 O2 = 2-glyceryl-prostaglandin G2. It catalyses the reaction 2-glyceryl-prostaglandin G2 + AH2 = 2-glyceryl-prostaglandin H2 + A + H2O. The enzyme catalyses (5Z,8Z,11Z,14Z)-eicosatetraenoate + O2 = (15R)-hydroperoxy-(5Z,8Z,11Z,13E)-eicosatetraenoate. The catalysed reaction is (5Z,8Z,11Z,14Z)-eicosatetraenoate + O2 = 11R-hydroperoxy-(5Z,8Z,12E,14Z)-eicosatetraenoate. It carries out the reaction (9Z,12Z)-octadecadienoate + AH2 + O2 = (9R)-hydroxy-(10E,12Z)-octadecadienoate + A + H2O. It catalyses the reaction (9Z,12Z)-octadecadienoate + AH2 + O2 = (9S)-hydroxy-(10E,12Z)-octadecadienoate + A + H2O. The enzyme catalyses (9Z,12Z)-octadecadienoate + AH2 + O2 = (13S)-hydroxy-(9Z,11E)-octadecadienoate + A + H2O. The catalysed reaction is (9Z,12Z)-octadecadienoate + AH2 + O2 = (13R)-hydroxy-(9Z,11E)-octadecadienoate + A + H2O. Its pathway is lipid metabolism; prostaglandin biosynthesis. Inhibited by the nonsteroidal anti-inflammatory drugs aspirin, naproxen, diclofenac, meclofenamic acid, indomethacin and their analogs. Its function is as follows. Dual cyclooxygenase and peroxidase in the biosynthesis pathway of prostanoids, a class of C20 oxylipins mainly derived from arachidonate, with a particular role in the inflammatory response. The cyclooxygenase activity oxygenates arachidonate (AA, C20:4(n-6)) to the hydroperoxy endoperoxide prostaglandin G2 (PGG2), and the peroxidase activity reduces PGG2 to the hydroxy endoperoxide PGH2, the precursor of all 2-series prostaglandins and thromboxanes. This complex transformation is initiated by abstraction of hydrogen at carbon 13 (with S-stereochemistry), followed by insertion of molecular O2 to form the endoperoxide bridge between carbon 9 and 11 that defines prostaglandins. The insertion of a second molecule of O2 (bis-oxygenase activity) yields a hydroperoxy group in PGG2 that is then reduced to PGH2 by two electrons. Similarly catalyzes successive cyclooxygenation and peroxidation of dihomo-gamma-linoleate (DGLA, C20:3(n-6)) and eicosapentaenoate (EPA, C20:5(n-3)) to corresponding PGH1 and PGH3, the precursors of 1- and 3-series prostaglandins. In an alternative pathway of prostanoid biosynthesis, converts 2-arachidonoyl lysophopholipids to prostanoid lysophopholipids, which are then hydrolyzed by intracellular phospholipases to release free prostanoids. Metabolizes 2-arachidonoyl glycerol yielding the glyceryl ester of PGH2, a process that can contribute to pain response. Generates lipid mediators from n-3 and n-6 polyunsaturated fatty acids (PUFAs) via a lipoxygenase-type mechanism. Oxygenates PUFAs to hydroperoxy compounds and then reduces them to corresponding alcohols. Plays a role in the generation of resolution phase interaction products (resolvins) during both sterile and infectious inflammation. Metabolizes docosahexaenoate (DHA, C22:6(n-3)) to 17R-HDHA, a precursor of the D-series resolvins (RvDs). As a component of the biosynthetic pathway of E-series resolvins (RvEs), converts eicosapentaenoate (EPA, C20:5(n-3)) primarily to 18S-HEPE that is further metabolized by ALOX5 and LTA4H to generate 18S-RvE1 and 18S-RvE2. In vascular endothelial cells, converts docosapentaenoate (DPA, C22:5(n-3)) to 13R-HDPA, a precursor for 13-series resolvins (RvTs) shown to activate macrophage phagocytosis during bacterial infection. In activated leukocytes, contributes to oxygenation of hydroxyeicosatetraenoates (HETE) to diHETES (5,15-diHETE and 5,11-diHETE). Can also use linoleate (LA, (9Z,12Z)-octadecadienoate, C18:2(n-6)) as substrate and produce hydroxyoctadecadienoates (HODEs) in a regio- and stereospecific manner, being (9R)-HODE ((9R)-hydroxy-(10E,12Z)-octadecadienoate) and (13S)-HODE ((13S)-hydroxy-(9Z,11E)-octadecadienoate) its major products. During neuroinflammation, plays a role in neuronal secretion of specialized preresolving mediators (SPMs) 15R-lipoxin A4 that regulates phagocytic microglia. This Mus musculus (Mouse) protein is Prostaglandin G/H synthase 2.